The chain runs to 254 residues: UPF0246 protein FTW_0267 (254 aa).

This sequence belongs to the UPF0246 family.

This is UPF0246 protein FTW_0267 from Francisella tularensis subsp. tularensis (strain WY96-3418).